A 1186-amino-acid polypeptide reads, in one-letter code: Pumilio homolog 1 (1186 aa).

S2 is modified (N-acetylserine). S19 carries the phosphoserine modification. Residues 22-73 (LKHHPQEPANPNMPVVLTSGTGSQAQPQPAANQALAAGTHSSPVPGSIGVAG) are disordered. Positions 45–58 (QAQPQPAANQALAA) are enriched in low complexity. Residues S75, S98, and S106 each carry the phosphoserine modification. The residue at position 112 (T112) is a Phosphothreonine. Residues S124, S159, S197, S209, and S229 each carry the phosphoserine modification. Residues 233–272 (SCLRKGGFGPRDADSDENDKGEKKNKGTFDGDKLGDLKEE) form a disordered region. A compositionally biased stretch (basic and acidic residues) spans 250 to 272 (NDKGEKKNKGTFDGDKLGDLKEE). S305 bears the Phosphoserine mark. Over residues 485-502 (TNSANQQTTPQAQQGQQQ) the composition is skewed to low complexity. Disordered regions lie at residues 485 to 524 (TNSA…GQQT) and 613 to 648 (AGTT…FYGN). Over residues 511–524 (RPLTPNQNQQGQQT) the composition is skewed to polar residues. Residue T514 is modified to Phosphothreonine. Low complexity predominate over residues 626-639 (QQPQPQPQQQPNNN). Phosphoserine occurs at positions 709 and 714. The segment at 742-775 (GPVGMPLPSQGPGHSQTPPPSLSSHGSSSSLNLG) is disordered. Positions 763–775 (LSSHGSSSSLNLG) are enriched in low complexity. At R796 the chain carries Omega-N-methylarginine. Phosphoserine is present on residues S806 and S822. The region spanning 828 to 1168 (GRSRLLEDFR…HILAKLEKYY (341 aa)) is the PUM-HD domain. Pumilio repeat units lie at residues 848–883 (EIAG…LVFN), 884–919 (EILQ…ALAE), 920–955 (RIRG…EMVR), 956–991 (ELDG…FIID), 992–1027 (AFKG…PILE), 1028–1063 (ELHQ…KIVA), 1064–1099 (EIRG…VLID), and 1103–1142 (TMND…IVMH). The segment at 863–867 (SRFIQ) is adenine-nucleotide binding in RNA target. The segment at 899–903 (NYVIQ) is uracil-nucleotide binding in RNA target. The adenine-nucleotide binding in RNA target stretch occupies residues 935-939 (CRVIQ). Positions 971–975 (NHVVQ) are non-specific-nucleotide binding in RNA target. The segment at 1007–1011 (CRVIQ) is adenine-nucleotide binding in RNA target. Residues 1043 to 1047 (NYVIQ) form a uracil-nucleotide binding in RNA target region. Guanine-nucleotide binding in RNA target stretches follow at residues 1079–1083 (SNVVE) and 1080–1083 (NVVE). Positions 1122–1126 (NYVVQ) are uracil-nucleotide binding in RNA target.

In terms of assembly, recruits the CCR4-POP2-NOT deadenylase leading to translational inhibition and mRNA degradation. Interacts with TRIM71 (via NHL repeats) in an RNA-dependent manner. Phosphorylation at Ser-714 promotes RNA-binding activity. Following growth factor stimulation phosphorylated at Ser-714, promoting binding to the 3'-UTR of CDKN1B/p27 mRNA.

Its subcellular location is the cytoplasm. It is found in the P-body. It localises to the cytoplasmic granule. Sequence-specific RNA-binding protein that acts as a post-transcriptional repressor by binding the 3'-UTR of mRNA targets. Binds to an RNA consensus sequence, the Pumilio Response Element (PRE), 5'-UGUANAUA-3', that is related to the Nanos Response Element (NRE). Mediates post-transcriptional repression of transcripts via different mechanisms: acts via direct recruitment of the CCR4-POP2-NOT deadenylase leading to translational inhibition and mRNA degradation. Also mediates deadenylation-independent repression by promoting accessibility of miRNAs. Following growth factor stimulation, phosphorylated and binds to the 3'-UTR of CDKN1B/p27 mRNA, inducing a local conformational change that exposes miRNA-binding sites, promoting association of miR-221 and miR-222, efficient suppression of CDKN1B/p27 expression, and rapid entry to the cell cycle. Acts as a post-transcriptional repressor of E2F3 mRNAs by binding to its 3'-UTR and facilitating miRNA regulation. Represses a program of genes necessary to maintain genomic stability such as key mitotic, DNA repair and DNA replication factors. Its ability to repress those target mRNAs is regulated by the lncRNA NORAD (non-coding RNA activated by DNA damage) which, due to its high abundance and multitude of PUMILIO binding sites, is able to sequester a significant fraction of PUM1 and PUM2 in the cytoplasm. Involved in neuronal functions by regulating ATXN1 mRNA levels: acts by binding to the 3'-UTR of ATXN1 transcripts, leading to their down-regulation independently of the miRNA machinery. Plays a role in cytoplasmic sensing of viral infection. In testis, acts as a post-transcriptional regulator of spermatogenesis by binding to the 3'-UTR of mRNAs coding for regulators of p53/TP53. Involved in embryonic stem cell renewal by facilitating the exit from the ground state: acts by targeting mRNAs coding for naive pluripotency transcription factors and accelerates their down-regulation at the onset of differentiation. Binds specifically to miRNA MIR199A precursor, with PUM2, regulates miRNA MIR199A expression at a postranscriptional level. The sequence is that of Pumilio homolog 1 (PUM1) from Pongo abelii (Sumatran orangutan).